The following is a 254-amino-acid chain: Winged helix repair factor 1 (254 aa).

The Bipartite nuclear localization signal motif lies at 4 to 21 (KRHHLIPETFGVKRRRKR). Winged helix domain regions lie at residues 32–104 (EPGS…GIIF), 120–179 (PYAG…LAVP), and 180–254 (GAGR…LPET).

It belongs to the STK19 family. As to quaternary structure, monomer in solution. Homodimer; when bound to DNA. Component of a transcription-coupled nucleotide excision repair (TC-NER) complex composed of STK19, ERCC6, ERCC8, DDA1, DDB1, ELOF1 and UVSSA which assembles and interacts with the multiprotein RNA polymerase II complex when it stalls at DNA lesions. In terms of tissue distribution, monocytes, hepatocytes, epithelial cells, T- and B-lymphocytes.

It is found in the nucleus. The protein localises to the cytoplasm. In terms of biological role, DNA-binding protein which is required for efficient transcription-coupled nucleotide excision repair (TC-NER). Acts as part of a TC-NER complex which assembles and interacts with RNA polymerase II (RNAPII) when it stalls at DNA lesions. TC-NER complex subunit UVSSA binds to the GTF2H1/p62 subunit of the TFIIH transcription factor complex, tethering TFIIH to the TC-NER complex. WHR1/STK19 then interacts with the XPD helicase subunit of TFIIH which guides TFIIH to DNA downstream of the stalled RNAPII, ensuring DNA repair. Directly interacts with RNAPII and also binds to downstream DNA. Promotes the timely removal of DNA damage-stalled RNAPII, allowing downstream NER factors to access DNA lesions. Required for monoubiquitination of UVSSA. Regulates repositioning and stabilization of UVSSA within the TC-NER complex. Stimulates ubiquitination of RNAPII complex member RBP1. Also binds to RNA and regulates the expression levels of many mRNAs. The protein is Winged helix repair factor 1 of Homo sapiens (Human).